A 167-amino-acid chain; its full sequence is MKTNCEFPLLCLLIVLVANVEGEVEDTGLKMVKRLWRNWEDPEQRQLLDQETELEKQREKRLWRNWEDLELRQLLNEFAENQREKRLWRNWERRQVANEDDGEKAKELWRNWEDLKRRQVADLNDEQETQRDKRLWRNWEDNHATLRKRSADSLSRQKRLGKERGKE.

The signal sequence occupies residues 1-22; it reads MKTNCEFPLLCLLIVLVANVEG. Positions 23–94 are excised as a propeptide; that stretch reads EVEDTGLKMV…KRLWRNWERR (72 aa). RLWRNWE repeat units follow at residues 34-40, 61-67, and 86-92; these read RLWRNWE. Q95 is modified (pyrrolidone carboxylic acid). Residues 107–113 form an RLWRNWE 4; approximate repeat; the sequence is ELWRNWE. A propeptide spanning residues 112–118 is cleaved from the precursor; sequence WEDLKRR. A Pyrrolidone carboxylic acid modification is found at Q119. Residues 134–140 form an RLWRNWE 5 repeat; sequence RLWRNWE. The propeptide occupies 139-167; that stretch reads WEDNHATLRKRSADSLSRQKRLGKERGKE. A disordered region spans residues 147–167; sequence RKRSADSLSRQKRLGKERGKE.

Belongs to the scoloptoxin-08 family. As to expression, expressed by the venom gland.

It is found in the secreted. The protein is U-scoloptoxin(08)-Er5b of Ethmostigmus rubripes (Giant centipede).